The chain runs to 64 residues: Potassium channel toxin kappa-KTx 3.1 (64 aa).

The N-terminal stretch at 1 to 26 (MKSTLMTASVLILVLLSIVDYASVYA) is a signal peptide. Residues 27–36 (EFIDSEISLE) constitute a propeptide that is removed on maturation. Disulfide bonds link cysteine 43–cysteine 61 and cysteine 47–cysteine 57.

Belongs to the short scorpion toxin superfamily. Potassium channel inhibitor kappa-KTx family. Kappa-KTx 3 subfamily. In terms of tissue distribution, expressed by the venom gland.

The protein resides in the secreted. Potassium channel inhibitor (Kv). This Heterometrus petersii (Asian forest scorpion) protein is Potassium channel toxin kappa-KTx 3.1.